The sequence spans 73 residues: Small ribosomal subunit protein eS27 (73 aa).

Zn(2+) is bound by residues Cys28, Cys31, Cys47, and Cys50. The C4-type zinc-finger motif lies at 28-50 (CVDCGNEQIIFGNASTEVKCHIC).

Belongs to the eukaryotic ribosomal protein eS27 family. As to quaternary structure, part of the 30S ribosomal subunit. The cofactor is Zn(2+).

This chain is Small ribosomal subunit protein eS27, found in Methanopyrus kandleri (strain AV19 / DSM 6324 / JCM 9639 / NBRC 100938).